The following is a 446-amino-acid chain: 3',5'-cyclic-AMP phosphodiesterase 7B (446 aa).

Residues 97–420 (LDEDYLGQAR…AQWKSLLSNQ (324 aa)) form the PDEase domain. H173 (proton donor) is an active-site residue. A divalent metal cation contacts are provided by H177, H213, D214, and D323. The segment at 422-446 (RRRGSGQDLAGPAPETLEQTEGATP) is disordered. Phosphoserine is present on S426. T445 bears the Phosphothreonine mark.

The protein belongs to the cyclic nucleotide phosphodiesterase family. PDE7 subfamily. A divalent metal cation is required as a cofactor. Highly expressed in brain.

It catalyses the reaction 3',5'-cyclic AMP + H2O = AMP + H(+). It functions in the pathway purine metabolism; 3',5'-cyclic AMP degradation; AMP from 3',5'-cyclic AMP: step 1/1. With respect to regulation, inhibited by dipyridamole, IBMX and SCH 51866. Insensitive to zaprinast, rolipram, and milrinone. Functionally, hydrolyzes the second messenger cAMP, which is a key regulator of many important physiological processes. May be involved in the control of cAMP-mediated neural activity and cAMP metabolism in the brain. The polypeptide is 3',5'-cyclic-AMP phosphodiesterase 7B (Mus musculus (Mouse)).